The sequence spans 231 residues: L-ribulose-5-phosphate 4-epimerase (231 aa).

Substrate-binding positions include 27 to 28 (GN), 44 to 45 (SG), and 74 to 75 (SS). Residues aspartate 76, histidine 95, and histidine 97 each coordinate Zn(2+). The active-site Proton donor/acceptor is the aspartate 120. Zn(2+) is bound at residue histidine 171. Tyrosine 229 (proton donor/acceptor) is an active-site residue.

The protein belongs to the aldolase class II family. AraD/FucA subfamily. Homotetramer. Zn(2+) serves as cofactor.

It catalyses the reaction L-ribulose 5-phosphate = D-xylulose 5-phosphate. It participates in carbohydrate degradation; L-arabinose degradation via L-ribulose; D-xylulose 5-phosphate from L-arabinose (bacterial route): step 3/3. Its function is as follows. Involved in the degradation of L-arabinose. Catalyzes the interconversion of L-ribulose 5-phosphate (LRu5P) and D-xylulose 5-phosphate (D-Xu5P) via a retroaldol/aldol mechanism (carbon-carbon bond cleavage analogous to a class II aldolase reaction). The sequence is that of L-ribulose-5-phosphate 4-epimerase from Salmonella typhimurium (strain LT2 / SGSC1412 / ATCC 700720).